We begin with the raw amino-acid sequence, 364 residues long: Glycerophosphodiester phosphodiesterase (364 aa).

The signal sequence occupies residues 1-18 (MKLKTLALSLLAAGVLAG). A lipid anchor (N-palmitoyl cysteine) is attached at cysteine 19. Cysteine 19 carries the S-diacylglycerol cysteine lipid modification. Residues 35–360 (KIIIAHRGAS…DFPDTGVEFL (326 aa)) form the GP-PDE domain. The active-site Proton acceptor is the histidine 40. Ca(2+)-binding residues include glutamate 67 and aspartate 69. Residue histidine 82 is the Proton donor of the active site. Position 175 (glutamate 175) interacts with Ca(2+).

The protein belongs to the glycerophosphoryl diester phosphodiesterase family. Ca(2+) serves as cofactor. Contains both ester- and amide-linked fatty acids.

The protein localises to the cell outer membrane. The catalysed reaction is a sn-glycero-3-phosphodiester + H2O = an alcohol + sn-glycerol 3-phosphate + H(+). Glycerophosphodiester phosphodiesterase hydrolyzes glycerophosphodiesters into glycerol-3-phosphate (G3P) and the corresponding alcohol. Has a specific affinity for human immunoglobulin D myeloma protein. This is Glycerophosphodiester phosphodiesterase (glpQ) from Haemophilus influenzae (strain ATCC 51907 / DSM 11121 / KW20 / Rd).